Here is a 435-residue protein sequence, read N- to C-terminus: Hyaluronidase-1 (435 aa).

The N-terminal stretch at M1 to G21 is a signal peptide. 2 disulfides stabilise this stretch: C43–C333 and C207–C221. N99 carries an N-linked (GlcNAc...) asparagine glycan. The Proton donor role is filled by E131. N-linked (GlcNAc...) asparagine glycosylation is found at N216 and N350. Residues G354 to E430 enclose the EGF-like domain. Disulfide bonds link C358-C369, C363-C418, and C420-C429.

The protein belongs to the glycosyl hydrolase 56 family. As to expression, highly expressed in the liver, kidney and heart. Weakly expressed in lung, placenta and skeletal muscle. No expression detected in adult brain. Isoform 1 is expressed only in bladder and prostate cancer cells, G2/G3 bladder tumor tissues and lymph node specimens showing tumor invasive tumors cells. Isoform 3, isoform 4, isoform 5 and isoform 6 are expressed in normal bladder and bladder tumor tissues.

The protein localises to the secreted. It localises to the lysosome. It catalyses the reaction Random hydrolysis of (1-&gt;4)-linkages between N-acetyl-beta-D-glucosamine and D-glucuronate residues in hyaluronate.. In terms of biological role, may have a role in promoting tumor progression. May block the TGFB1-enhanced cell growth. This is Hyaluronidase-1 (HYAL1) from Homo sapiens (Human).